The chain runs to 269 residues: 3-methyl-2-oxobutanoate hydroxymethyltransferase (269 aa).

Mg(2+) contacts are provided by Asp-43 and Asp-82. Residues Asp-43–Ser-44, Asp-82, and Lys-110 each bind 3-methyl-2-oxobutanoate. Glu-112 contributes to the Mg(2+) binding site. Glu-179 functions as the Proton acceptor in the catalytic mechanism.

The protein belongs to the PanB family. In terms of assembly, homodecamer; pentamer of dimers. Requires Mg(2+) as cofactor.

It localises to the cytoplasm. The catalysed reaction is 3-methyl-2-oxobutanoate + (6R)-5,10-methylene-5,6,7,8-tetrahydrofolate + H2O = 2-dehydropantoate + (6S)-5,6,7,8-tetrahydrofolate. The protein operates within cofactor biosynthesis; (R)-pantothenate biosynthesis; (R)-pantoate from 3-methyl-2-oxobutanoate: step 1/2. Catalyzes the reversible reaction in which hydroxymethyl group from 5,10-methylenetetrahydrofolate is transferred onto alpha-ketoisovalerate to form ketopantoate. The polypeptide is 3-methyl-2-oxobutanoate hydroxymethyltransferase (Acinetobacter baylyi (strain ATCC 33305 / BD413 / ADP1)).